A 233-amino-acid chain; its full sequence is Cilia- and flagella-associated protein 299 (233 aa).

The protein resides in the cytoplasm. The protein localises to the nucleus. May be involved in spermatogenesis. In Xenopus laevis (African clawed frog), this protein is Cilia- and flagella-associated protein 299.